A 558-amino-acid chain; its full sequence is Deleted in azoospermia protein 2 (558 aa).

The segment covering 1–10 has biased composition (polar residues); sequence MSAANPETPN. The interval 1 to 27 is disordered; it reads MSAANPETPNSTISREASTQSSSAAAS. Low complexity predominate over residues 11 to 27; it reads STISREASTQSSSAAAS. Positions 40-115 constitute an RRM domain; the sequence is NTVFVGGIDA…KKLKLGPAIR (76 aa). DAZ domains follow at residues 167–190, 191–214, 215–238, 239–262, 263–286, 287–310, 311–334, 335–358, 359–382, 383–406, 407–430, 431–454, 455–478, 479–502, and 503–526; these read AYSAYPHSPGQVITGCQLLVYNYQ, EYPTYPDSAFQVTTGYQLPVYNYQ, PFPAYPRSPFQVTAGYQLPVYNYQ, AFPAYPNSPFQVATGYQFPVYNYQ, PFPAYPSSPFQVTAGYQLPVYNYQ, AFPAYPNSPVQVTTGYQLPVYNYQ, AFPAYPSSPFQVTTGYQLPVYNYQ, and AFPAYPNSAVQVTTGYQFHVYNYQ.

It belongs to the RRM DAZ family. As to quaternary structure, forms a heterodimer with BOLL and DAZL. Interacts with PUM2, DAZAP1, DAZAP2, DZIP1 and DZIP3. Testis specific.

The protein localises to the cytoplasm. The protein resides in the nucleus. Functionally, RNA-binding protein that plays an essential role in spermatogenesis. May act by binding to the 3'-UTR of mRNAs and regulating their translation. This is Deleted in azoospermia protein 2 (DAZ2) from Homo sapiens (Human).